The following is a 255-amino-acid chain: 5-oxoprolinase subunit A (255 aa).

The protein belongs to the LamB/PxpA family. In terms of assembly, forms a complex composed of PxpA, PxpB and PxpC.

The enzyme catalyses 5-oxo-L-proline + ATP + 2 H2O = L-glutamate + ADP + phosphate + H(+). In terms of biological role, catalyzes the cleavage of 5-oxoproline to form L-glutamate coupled to the hydrolysis of ATP to ADP and inorganic phosphate. The chain is 5-oxoprolinase subunit A from Rhodopseudomonas palustris (strain BisB18).